The following is a 351-amino-acid chain: Biotin synthase (351 aa).

Positions asparagine 58–arginine 285 constitute a Radical SAM core domain. Residues cysteine 73, cysteine 77, and cysteine 80 each contribute to the [4Fe-4S] cluster site. The [2Fe-2S] cluster site is built by cysteine 117, cysteine 148, cysteine 208, and arginine 280.

This sequence belongs to the radical SAM superfamily. Biotin synthase family. As to quaternary structure, homodimer. [4Fe-4S] cluster serves as cofactor. It depends on [2Fe-2S] cluster as a cofactor.

The catalysed reaction is (4R,5S)-dethiobiotin + (sulfur carrier)-SH + 2 reduced [2Fe-2S]-[ferredoxin] + 2 S-adenosyl-L-methionine = (sulfur carrier)-H + biotin + 2 5'-deoxyadenosine + 2 L-methionine + 2 oxidized [2Fe-2S]-[ferredoxin]. It functions in the pathway cofactor biosynthesis; biotin biosynthesis; biotin from 7,8-diaminononanoate: step 2/2. Its function is as follows. Catalyzes the conversion of dethiobiotin (DTB) to biotin by the insertion of a sulfur atom into dethiobiotin via a radical-based mechanism. The chain is Biotin synthase from Paraburkholderia phymatum (strain DSM 17167 / CIP 108236 / LMG 21445 / STM815) (Burkholderia phymatum).